A 285-amino-acid chain; its full sequence is MSEHNVYGAAQPAQPGQPAQPRTRIRTHHLQKMKAEGHKWAMLTAYDYSTARIFDEAGIPVLLVGDSAANVVYGYDTTVPVSIDELIPLVRGVVRGAPHALVVADLPFGSYEAGPAAALAAATRFMKEGGAHAVKLEGGERVAEQIAHLTAAGIPVMAHIGFTPQSVNSLGGFRVQGRGDAAEQTIADAIAVAEAGAFSVVMEMVPAELATQITGKLTIPTIGIGAGPNCDGQVLVWQDMAGMSSGKSARFVKRFADIGGELRRAATQYAHEVAAGVFPADEHCF.

The disordered stretch occupies residues 1-22; the sequence is MSEHNVYGAAQPAQPGQPAQPR. Low complexity predominate over residues 8–21; that stretch reads GAAQPAQPGQPAQP. Residues D66 and D105 each coordinate Mg(2+). 3-methyl-2-oxobutanoate contacts are provided by residues 66–67, D105, and K135; that span reads DS. E137 contacts Mg(2+). Residue E203 is the Proton acceptor of the active site.

This sequence belongs to the PanB family. As to quaternary structure, homodecamer; pentamer of dimers. The cofactor is Mg(2+).

The protein resides in the cytoplasm. It carries out the reaction 3-methyl-2-oxobutanoate + (6R)-5,10-methylene-5,6,7,8-tetrahydrofolate + H2O = 2-dehydropantoate + (6S)-5,6,7,8-tetrahydrofolate. The protein operates within cofactor biosynthesis; (R)-pantothenate biosynthesis; (R)-pantoate from 3-methyl-2-oxobutanoate: step 1/2. Catalyzes the reversible reaction in which hydroxymethyl group from 5,10-methylenetetrahydrofolate is transferred onto alpha-ketoisovalerate to form ketopantoate. The sequence is that of 3-methyl-2-oxobutanoate hydroxymethyltransferase from Mycolicibacterium paratuberculosis (strain ATCC BAA-968 / K-10) (Mycobacterium paratuberculosis).